The sequence spans 104 residues: MRGMGNMQGMMKKMQKMQKEMMEAQEALNAEQFEGVAGGGMVKVTVSGQREVVSVNLDESVVDPEDIEMLQDLIVIATNEALKKVEEKTNSTMGKFTQGLNLPF.

A compositionally biased stretch (low complexity) spans 1-12 (MRGMGNMQGMMK). The segment at 1–22 (MRGMGNMQGMMKKMQKMQKEMM) is disordered.

It belongs to the YbaB/EbfC family. Homodimer.

It localises to the cytoplasm. Its subcellular location is the nucleoid. Functionally, binds to DNA and alters its conformation. May be involved in regulation of gene expression, nucleoid organization and DNA protection. This Lysinibacillus sphaericus (strain C3-41) protein is Nucleoid-associated protein Bsph_0039.